A 423-amino-acid polypeptide reads, in one-letter code: Glycine-rich protein 1 (423 aa).

The first 20 residues, 1-20 (MKKICLTFVFLLSLFPIYSS), serve as a signal peptide directing secretion. Disordered regions lie at residues 28–47 (TIES…AGPA), 78–133 (DDDN…SKKN), 159–219 (KGGS…GAGA), and 236–288 (GASA…ASAG). Residues 31–42 (SGSSKSSGSSVG) show a composition bias toward low complexity. Composition is skewed to basic and acidic residues over residues 81 to 93 (NKDK…DGKT) and 102 to 111 (QNGDDVKSDN). Gly residues predominate over residues 159–172 (KGGSANNGGEGGAT). Low complexity predominate over residues 173-183 (SAGSAGATSGA). Composition is skewed to gly residues over residues 205–219 (GAGG…GAGA) and 236–247 (GASAGAGAGGAQ). A compositionally biased stretch (low complexity) spans 248–284 (GDAEAASAGSTAGSTSSGGAAASGASSGAGSSDSGQG).

Nacreous layer of shell (at protein level).

The protein localises to the secreted. This chain is Glycine-rich protein 1, found in Pinctada maxima (Silver-lipped pearl oyster).